We begin with the raw amino-acid sequence, 1003 residues long: cGMP-dependent protein kinase (1003 aa).

Residues 1–141 (MGACSSKAQH…KAIKQQEDTQ (141 aa)) form a disordered region. A lipid anchor (N-myristoyl glycine) is attached at Gly-2. Cys-4 carries S-palmitoyl cysteine lipidation. A compositionally biased stretch (low complexity) spans 69 to 85 (EQQQQQQQQQQQQQEQQ). Basic and acidic residues-rich tracts occupy residues 86–109 (QHPEHQQSEKQQQHGEEQQQERKP) and 127–141 (ERKVQKAIKQQEDTQ). CNMP-binding domain regions lie at residues 173–289 (VCSS…FLAS), 292–391 (FFEM…RVLG), 411–548 (VFAS…ATLG), and 570–669 (IFRY…LQIV). 3',5'-cyclic GMP is bound by residues Gly-237, Glu-238, Arg-247, and Thr-248. Residues Arg-625, Gly-634, Glu-635, Ala-637, Arg-644, and Ser-645 each contribute to the 3',5'-cyclic GMP site. Residues 693–950 (LNVVRVVGRG…YKDIKEHAFF (258 aa)) form the Protein kinase domain. Residues 699 to 707 (VGRGTFGTV) and Lys-722 contribute to the ATP site. Asp-816 serves as the catalytic Proton acceptor. Residues 951–1003 (SDFDWDRLAGRDLSPPLLPKGEIYAEDAEEGGLDIEEDEGIELEDEYEWDKDF) form the AGC-kinase C-terminal domain.

The protein belongs to the protein kinase superfamily. AGC Ser/Thr protein kinase family. cGMP subfamily. In terms of assembly, monomer. It depends on Mg(2+) as a cofactor.

The protein resides in the cell membrane. It is found in the cytoplasm. The enzyme catalyses L-seryl-[protein] + ATP = O-phospho-L-seryl-[protein] + ADP + H(+). It carries out the reaction L-threonyl-[protein] + ATP = O-phospho-L-threonyl-[protein] + ADP + H(+). With respect to regulation, activated by cGMP. The cGMP-binding domains acts cooperatively to activate PKG. Inhibited by the antiparasitic small molecule 4-[2-(4-fluorophenyl)-5-(1-methylpiperidine-4-yl)-1Hpyrrol- 3-yl]pyridine (compound 1). Serine/threonine protein kinase which acts as a downstream effector of the second messenger cGMP. In Eimeria tenella (Coccidian parasite), this protein is cGMP-dependent protein kinase.